The sequence spans 209 residues: MSTSLPLRDDGAVRASFALALFVLLGLGLGYSLVATGITSALMPDQAHGSLLRADGRVIGSSLVAQPFADARYFQPRPSAAKYDPTAAAGSNQARSNPELLARIATARAEIAQRDGIAPDAVPGELLTQSGSGLDPHLSPAGAQVQLRRVAAARGWPEQRVAALLQAATEQPQFGLLGQPRINVLALNLALDRAGDGVPGTENGVEQQR.

The helical transmembrane segment at 18 to 38 (ALALFVLLGLGLGYSLVATGI) threads the bilayer.

It belongs to the KdpC family. In terms of assembly, the system is composed of three essential subunits: KdpA, KdpB and KdpC.

It localises to the cell inner membrane. Part of the high-affinity ATP-driven potassium transport (or Kdp) system, which catalyzes the hydrolysis of ATP coupled with the electrogenic transport of potassium into the cytoplasm. This subunit acts as a catalytic chaperone that increases the ATP-binding affinity of the ATP-hydrolyzing subunit KdpB by the formation of a transient KdpB/KdpC/ATP ternary complex. This is Potassium-transporting ATPase KdpC subunit from Xanthomonas campestris pv. campestris (strain 8004).